Reading from the N-terminus, the 366-residue chain is Putative ankyrin repeat protein RBE_0601 (366 aa).

ANK repeat units lie at residues 39–68 (KHGT…DINE), 94–124 (LPDE…DVNT), 131–160 (HGGA…IASQ), 162–186 (VISA…TAHD), 210–239 (KSSN…NPNA), and 250–280 (IALS…DTSK).

This Rickettsia bellii (strain RML369-C) protein is Putative ankyrin repeat protein RBE_0601.